An 805-amino-acid chain; its full sequence is ATP-dependent RNA helicase mak-5 (805 aa).

Over residues 1 to 10 (MAVDKKRKNT) the composition is skewed to basic residues. 2 disordered regions span residues 1 to 33 (MAVD…KRPV) and 79 to 189 (VPKS…ELET). Acidic residues predominate over residues 85 to 100 (EVEDDGEEFGGFDDEE). Composition is skewed to basic and acidic residues over residues 110-119 (QEVKTSETKA), 126-143 (AKEK…EQQK), and 164-189 (KNAE…ELET). The Q motif signature appears at 209-237 (SEWVPLDLSPRMISSIAKLRFSKPTVIQS). A Helicase ATP-binding domain is found at 240 to 463 (IPEIMAGHDV…AGKSKFKATS (224 aa)). 253 to 260 (ASTGSGKT) serves as a coordination point for ATP. The DEAD box motif lies at 372-375 (DEAD). A compositionally biased stretch (basic and acidic residues) spans 390–406 (FKALDRPPVEENNEDQK). The disordered stretch occupies residues 390–435 (FKALDRPPVEENNEDQKMGGTDEEGQEEEEEDSEEEEEEEEEHVNK). Over residues 410 to 431 (TDEEGQEEEEEDSEEEEEEEEE) the composition is skewed to acidic residues. A Helicase C-terminal domain is found at 510–666 (YLYATLMLQP…NSGNNTKKLV (157 aa)). Residues 729-751 (AGKWGGKGSSKKQKQKEAQQMSK) are disordered.

The protein belongs to the DEAD box helicase family. DDX24/MAK5 subfamily.

It localises to the nucleus. Its subcellular location is the nucleolus. The enzyme catalyses ATP + H2O = ADP + phosphate + H(+). Functionally, ATP-binding RNA helicase involved in the biogenesis of 60S ribosomal subunits and is required for the normal formation of 25S and 5.8S rRNAs. The chain is ATP-dependent RNA helicase mak-5 (mak-5) from Neurospora crassa (strain ATCC 24698 / 74-OR23-1A / CBS 708.71 / DSM 1257 / FGSC 987).